The following is a 117-amino-acid chain: NADH-quinone oxidoreductase subunit A (117 aa).

3 consecutive transmembrane segments (helical) span residues 4–24, 64–84, and 86–106; these read WIGVALFIVVGIVFGAGGMLT, LMFVIFDVEVIYLYPWAVSFV, and LGLAGLIKMFLFIFILVLGLW.

This sequence belongs to the complex I subunit 3 family. In terms of assembly, NDH-1 is composed of 14 different subunits. Subunits NuoA, H, J, K, L, M, N constitute the membrane sector of the complex.

The protein resides in the cell membrane. It carries out the reaction a quinone + NADH + 5 H(+)(in) = a quinol + NAD(+) + 4 H(+)(out). Functionally, NDH-1 shuttles electrons from NADH, via FMN and iron-sulfur (Fe-S) centers, to quinones in the respiratory chain. The immediate electron acceptor for the enzyme in this species is believed to be a menaquinone. Couples the redox reaction to proton translocation (for every two electrons transferred, four hydrogen ions are translocated across the cytoplasmic membrane), and thus conserves the redox energy in a proton gradient. The chain is NADH-quinone oxidoreductase subunit A from Desulforamulus reducens (strain ATCC BAA-1160 / DSM 100696 / MI-1) (Desulfotomaculum reducens).